The sequence spans 202 residues: Imidazoleglycerol-phosphate dehydratase (202 aa).

The protein belongs to the imidazoleglycerol-phosphate dehydratase family.

The protein localises to the cytoplasm. The enzyme catalyses D-erythro-1-(imidazol-4-yl)glycerol 3-phosphate = 3-(imidazol-4-yl)-2-oxopropyl phosphate + H2O. It functions in the pathway amino-acid biosynthesis; L-histidine biosynthesis; L-histidine from 5-phospho-alpha-D-ribose 1-diphosphate: step 6/9. The polypeptide is Imidazoleglycerol-phosphate dehydratase (Rhizobium etli (strain CIAT 652)).